The chain runs to 283 residues: Adenosyl-chloride synthase (283 aa).

Substrate is bound by residues Asp11, 70-72, and 128-131; these read YVY and TWYG. Gly131 is a binding site for chloride.

Belongs to the SAM hydrolase / SAM-dependent halogenase family. In terms of assembly, homotrimer.

It carries out the reaction chloride + S-adenosyl-L-methionine = 5'-chloro-5'-deoxyadenosine + L-methionine. Its function is as follows. Involved in the biosynthesis of the proteosome inhibitor salinosporamide A (SalA). Catalyzes the halogenation of S-adenosyl-L-methionine (SAM) with chloride to generate 5'-chloro-5'-deoxyadenosine (5'-CIDA) and L-methionine. It can also use bromide and iodide, producing halogenated 5'-deoxyadenosine (5'-XDA) and L-methionine, however no halogenase activity is detected in the presence of fluoride. This chain is Adenosyl-chloride synthase, found in Salinispora tropica (strain ATCC BAA-916 / DSM 44818 / JCM 13857 / NBRC 105044 / CNB-440).